Here is a 297-residue protein sequence, read N- to C-terminus: Homoserine kinase (297 aa).

84-94 (PLSKGFGSSAA) contacts ATP.

The protein belongs to the GHMP kinase family. Homoserine kinase subfamily.

Its subcellular location is the cytoplasm. It catalyses the reaction L-homoserine + ATP = O-phospho-L-homoserine + ADP + H(+). The protein operates within amino-acid biosynthesis; L-threonine biosynthesis; L-threonine from L-aspartate: step 4/5. Catalyzes the ATP-dependent phosphorylation of L-homoserine to L-homoserine phosphate. In Shouchella clausii (strain KSM-K16) (Alkalihalobacillus clausii), this protein is Homoserine kinase.